The following is a 394-amino-acid chain: Cell division protein FtsZ (394 aa).

GTP is bound by residues 21-25, 108-110, Glu139, Arg143, and Asp187; these read GGGGN and GTG.

The protein belongs to the FtsZ family. In terms of assembly, homodimer. Polymerizes to form a dynamic ring structure in a strictly GTP-dependent manner. Interacts directly with several other division proteins.

The protein localises to the cytoplasm. Functionally, essential cell division protein that forms a contractile ring structure (Z ring) at the future cell division site. The regulation of the ring assembly controls the timing and the location of cell division. One of the functions of the FtsZ ring is to recruit other cell division proteins to the septum to produce a new cell wall between the dividing cells. Binds GTP and shows GTPase activity. The polypeptide is Cell division protein FtsZ (Azotobacter vinelandii).